Reading from the N-terminus, the 76-residue chain is MTKAITLAIFMVVLVLGMVTKETQGEEKQCYDYLLTPQENCEGLICAHECTMQHGGNGVCVDTTSTVCICTYDCTS.

Residues 1–25 form the signal peptide; sequence MTKAITLAIFMVVLVLGMVTKETQG. Disulfide bonds link Cys30–Cys74, Cys41–Cys60, Cys46–Cys68, and Cys50–Cys70.

This sequence belongs to the DEFL family.

It is found in the secreted. The chain is Defensin-like protein 125 (LCR54) from Arabidopsis thaliana (Mouse-ear cress).